The following is a 500-amino-acid chain: L-arabinose isomerase (500 aa).

The Mn(2+) site is built by E306, E333, H350, and H450.

Belongs to the arabinose isomerase family. In terms of assembly, homohexamer. Mn(2+) is required as a cofactor.

It catalyses the reaction beta-L-arabinopyranose = L-ribulose. Its pathway is carbohydrate degradation; L-arabinose degradation via L-ribulose; D-xylulose 5-phosphate from L-arabinose (bacterial route): step 1/3. Functionally, catalyzes the conversion of L-arabinose to L-ribulose. The chain is L-arabinose isomerase from Yersinia pseudotuberculosis serotype I (strain IP32953).